The sequence spans 351 residues: MRITNQDKKQGLIEVVPETIDDLWHLSHIVEVNDYVSTLTARRIQDNNSGKTRADRGVKKKFFLGIRVEKINFHKYTGMLRFTGIIESGPEDLIPLGSHHTINVQLNNSIRIKKIWNKWSLERLNQAIEASNRANEIIVAIEDNTTELGIIKQYGIDYIGPIIGDISGKQNIEKNRAQKVNEYYEDITKTLTQQKDIDKLIIIGPGFTKNGYYNYLEENYPKLAKKVILESTGAGGHAGIQEVLKNGLIESLSKDAKIAKEAALVNKLLEQIGKSSNTVTYGKKQVITASNMGAVEKLLVLEDLVRDKNIQNIMNTVENMGGVVTIISSQHDAGQQLKALGSLAAFLRYPI.

Belongs to the eukaryotic release factor 1 family. Pelota subfamily. In terms of assembly, monomer. The cofactor is a divalent metal cation.

It is found in the cytoplasm. Functionally, may function in recognizing stalled ribosomes, interact with stem-loop structures in stalled mRNA molecules, and effect endonucleolytic cleavage of the mRNA. May play a role in the release non-functional ribosomes and degradation of damaged mRNAs. Has endoribonuclease activity. This chain is Protein pelota homolog, found in Methanosphaera stadtmanae (strain ATCC 43021 / DSM 3091 / JCM 11832 / MCB-3).